The primary structure comprises 231 residues: DNA mismatch repair protein MutH (231 aa).

This sequence belongs to the MutH family.

It is found in the cytoplasm. Its function is as follows. Sequence-specific endonuclease that cleaves unmethylated GATC sequences. It is involved in DNA mismatch repair. The chain is DNA mismatch repair protein MutH from Klebsiella pneumoniae (strain 342).